Consider the following 305-residue polypeptide: tRNA pseudouridine synthase B (305 aa).

Asp39 functions as the Nucleophile in the catalytic mechanism.

Belongs to the pseudouridine synthase TruB family. Type 1 subfamily.

It catalyses the reaction uridine(55) in tRNA = pseudouridine(55) in tRNA. Responsible for synthesis of pseudouridine from uracil-55 in the psi GC loop of transfer RNAs. The protein is tRNA pseudouridine synthase B of Staphylococcus aureus (strain Newman).